Reading from the N-terminus, the 260-residue chain is Deoxyribonuclease-1 (260 aa).

An N-linked (GlcNAc...) asparagine glycan is attached at Asn18. Glu78 is a catalytic residue. Cys101 and Cys104 form a disulfide bridge. His134 is an active-site residue. A disulfide bond links Cys173 and Cys209.

Belongs to the DNase I family. It depends on Ca(2+) as a cofactor. Mg(2+) is required as a cofactor.

Its subcellular location is the secreted. It is found in the zymogen granule. The protein localises to the nucleus envelope. The catalysed reaction is Endonucleolytic cleavage to 5'-phosphodinucleotide and 5'-phosphooligonucleotide end-products.. Its function is as follows. Serum endocuclease secreted into body fluids by a wide variety of exocrine and endocrine organs. Expressed by non-hematopoietic tissues and preferentially cleaves protein-free DNA. Among other functions, seems to be involved in cell death by apoptosis. Binds specifically to G-actin and blocks actin polymerization. Together with DNASE1L3, plays a key role in degrading neutrophil extracellular traps (NETs). NETs are mainly composed of DNA fibers and are released by neutrophils to bind pathogens during inflammation. Degradation of intravascular NETs by DNASE1 and DNASE1L3 is required to prevent formation of clots that obstruct blood vessels and cause organ damage following inflammation. This is Deoxyribonuclease-1 (DNASE1) from Ovis aries (Sheep).